A 198-amino-acid chain; its full sequence is Superoxide dismutase [Fe] (198 aa).

Fe(3+) contacts are provided by H27, H74, D157, and H161.

The protein belongs to the iron/manganese superoxide dismutase family. As to quaternary structure, homodimer. Fe(3+) serves as cofactor.

It catalyses the reaction 2 superoxide + 2 H(+) = H2O2 + O2. Functionally, destroys superoxide anion radicals which are normally produced within the cells and which are toxic to biological systems. The sequence is that of Superoxide dismutase [Fe] (sodB) from Pseudomonas putida (Arthrobacter siderocapsulatus).